The chain runs to 371 residues: Bifunctional enzyme IspD/IspF (371 aa).

The tract at residues 1–210 is 2-C-methyl-D-erythritol 4-phosphate cytidylyltransferase; the sequence is MLDISLIMLS…LNLPKPSWDI (210 aa). The 2-C-methyl-D-erythritol 2,4-cyclodiphosphate synthase stretch occupies residues 211–371; that stretch reads FNGNGFDVHE…NLKYFDWMKL (161 aa). The a divalent metal cation site is built by aspartate 217 and histidine 219. 4-CDP-2-C-methyl-D-erythritol 2-phosphate is bound by residues 217-219 and 243-244; these read DVH and HS. Histidine 251 contributes to the a divalent metal cation binding site. 4-CDP-2-C-methyl-D-erythritol 2-phosphate contacts are provided by residues 265–267, 270–274, 341–344, phenylalanine 348, and arginine 351; these read DIG, FPDND, and TTTE.

In the N-terminal section; belongs to the IspD/TarI cytidylyltransferase family. IspD subfamily. The protein in the C-terminal section; belongs to the IspF family. It depends on a divalent metal cation as a cofactor.

The enzyme catalyses 2-C-methyl-D-erythritol 4-phosphate + CTP + H(+) = 4-CDP-2-C-methyl-D-erythritol + diphosphate. The catalysed reaction is 4-CDP-2-C-methyl-D-erythritol 2-phosphate = 2-C-methyl-D-erythritol 2,4-cyclic diphosphate + CMP. The protein operates within isoprenoid biosynthesis; isopentenyl diphosphate biosynthesis via DXP pathway; isopentenyl diphosphate from 1-deoxy-D-xylulose 5-phosphate: step 2/6. It functions in the pathway isoprenoid biosynthesis; isopentenyl diphosphate biosynthesis via DXP pathway; isopentenyl diphosphate from 1-deoxy-D-xylulose 5-phosphate: step 4/6. In terms of biological role, bifunctional enzyme that catalyzes the formation of 4-diphosphocytidyl-2-C-methyl-D-erythritol from CTP and 2-C-methyl-D-erythritol 4-phosphate (MEP) (IspD), and catalyzes the conversion of 4-diphosphocytidyl-2-C-methyl-D-erythritol 2-phosphate (CDP-ME2P) to 2-C-methyl-D-erythritol 2,4-cyclodiphosphate (ME-CPP) with a corresponding release of cytidine 5-monophosphate (CMP) (IspF). The protein is Bifunctional enzyme IspD/IspF of Campylobacter lari (strain RM2100 / D67 / ATCC BAA-1060).